The primary structure comprises 60 residues: Stress response protein YkoL (60 aa).

The sequence is that of Stress response protein YkoL (ykoL) from Bacillus subtilis (strain 168).